The primary structure comprises 290 residues: Small ribosomal subunit protein bS6 (290 aa).

A disordered region spans residues 208-233 (VEEAKTTAKKPAAPKMSAAERAKVDG).

Belongs to the bacterial ribosomal protein bS6 family.

Binds together with bS18 to 16S ribosomal RNA. The chain is Small ribosomal subunit protein bS6 from Mesoplasma florum (strain ATCC 33453 / NBRC 100688 / NCTC 11704 / L1) (Acholeplasma florum).